Reading from the N-terminus, the 249-residue chain is Small ribosomal subunit protein uS2 (249 aa).

This sequence belongs to the universal ribosomal protein uS2 family.

The sequence is that of Small ribosomal subunit protein uS2 from Listeria monocytogenes serovar 1/2a (strain ATCC BAA-679 / EGD-e).